We begin with the raw amino-acid sequence, 161 residues long: MAKKKSKQKAGSNTIALNKKARHEYFIEDEIEAGLELQGWEVKALRQGKANISESYVFMRDGEAFVSGMTITPLNQASTHVVANPTRVRKLLMSRRELDNLLGRINREGMTLTALSLYWSRSWVKIKIGVAKGKKLHDKRTDLKEKDWAREKARVMKSALR.

It belongs to the SmpB family.

It localises to the cytoplasm. Functionally, required for rescue of stalled ribosomes mediated by trans-translation. Binds to transfer-messenger RNA (tmRNA), required for stable association of tmRNA with ribosomes. tmRNA and SmpB together mimic tRNA shape, replacing the anticodon stem-loop with SmpB. tmRNA is encoded by the ssrA gene; the 2 termini fold to resemble tRNA(Ala) and it encodes a 'tag peptide', a short internal open reading frame. During trans-translation Ala-aminoacylated tmRNA acts like a tRNA, entering the A-site of stalled ribosomes, displacing the stalled mRNA. The ribosome then switches to translate the ORF on the tmRNA; the nascent peptide is terminated with the 'tag peptide' encoded by the tmRNA and targeted for degradation. The ribosome is freed to recommence translation, which seems to be the essential function of trans-translation. The chain is SsrA-binding protein from Vibrio parahaemolyticus serotype O3:K6 (strain RIMD 2210633).